We begin with the raw amino-acid sequence, 79 residues long: Acyl carrier protein (79 aa).

The Carrier domain occupies 1-77 (MNNVEKKIKK…KSIDYINNKN (77 aa)). Ser37 carries the O-(pantetheine 4'-phosphoryl)serine modification.

This sequence belongs to the acyl carrier protein (ACP) family. 4'-phosphopantetheine is transferred from CoA to a specific serine of apo-ACP by AcpS. This modification is essential for activity because fatty acids are bound in thioester linkage to the sulfhydryl of the prosthetic group.

Its subcellular location is the cytoplasm. Its pathway is lipid metabolism; fatty acid biosynthesis. In terms of biological role, carrier of the growing fatty acid chain in fatty acid biosynthesis. The polypeptide is Acyl carrier protein (Buchnera aphidicola subsp. Schizaphis graminum (strain Sg)).